Reading from the N-terminus, the 695-residue chain is Polyribonucleotide nucleotidyltransferase (695 aa).

Mg(2+)-binding residues include Asp486 and Asp492. One can recognise a KH domain in the interval 553–612 (PRIETMQINTSKIATVIGPGGKQIRQIIERSGAQVDINDDGVINIAASTQESINKAKELI). Residues 622-690 (GKVYNGRVTS…EKGQLKLSHK (69 aa)) form the S1 motif domain.

This sequence belongs to the polyribonucleotide nucleotidyltransferase family. It depends on Mg(2+) as a cofactor.

It localises to the cytoplasm. It carries out the reaction RNA(n+1) + phosphate = RNA(n) + a ribonucleoside 5'-diphosphate. Its function is as follows. Involved in mRNA degradation. Catalyzes the phosphorolysis of single-stranded polyribonucleotides processively in the 3'- to 5'-direction. This is Polyribonucleotide nucleotidyltransferase from Chlamydia trachomatis serovar A (strain ATCC VR-571B / DSM 19440 / HAR-13).